The chain runs to 746 residues: NAD(P)H-quinone oxidoreductase subunit 5, chloroplastic (746 aa).

The next 16 helical transmembrane spans lie at 9–29 (WIIP…LLLF), 40–60 (WTFL…YLSI), 89–109 (IDPL…LVLI), 125–145 (FAYM…SNLI), 147–167 (VYFF…FWFT), 185–205 (GDFG…SFEF), 221–241 (VNLL…IAKS), 258–278 (TPIS…FLVA), 280–300 (LLPL…IGII), 327–347 (LGYM…FHLI), 354–374 (ALLF…VGYS), 396–416 (TAFL…CFWS), 425–445 (LLFS…TAFY), 547–567 (ILFP…IGIP), 608–628 (FSVS…KPFY), and 723–743 (YLFL…FFYF).

The protein belongs to the complex I subunit 5 family. NDH is composed of at least 16 different subunits, 5 of which are encoded in the nucleus.

Its subcellular location is the plastid. It is found in the chloroplast thylakoid membrane. The catalysed reaction is a plastoquinone + NADH + (n+1) H(+)(in) = a plastoquinol + NAD(+) + n H(+)(out). It carries out the reaction a plastoquinone + NADPH + (n+1) H(+)(in) = a plastoquinol + NADP(+) + n H(+)(out). Functionally, NDH shuttles electrons from NAD(P)H:plastoquinone, via FMN and iron-sulfur (Fe-S) centers, to quinones in the photosynthetic chain and possibly in a chloroplast respiratory chain. The immediate electron acceptor for the enzyme in this species is believed to be plastoquinone. Couples the redox reaction to proton translocation, and thus conserves the redox energy in a proton gradient. This Lepidium virginicum (Virginia pepperweed) protein is NAD(P)H-quinone oxidoreductase subunit 5, chloroplastic (ndhF).